The primary structure comprises 194 residues: Phosphoheptose isomerase (194 aa).

In terms of domain architecture, SIS spans 37 to 194 (ISDSFKQGGK…LIEFEMAKDV (158 aa)). 52–54 (NGG) contacts substrate. His61 and Glu65 together coordinate Zn(2+). Substrate contacts are provided by residues Glu65, 93–94 (ND), 119–121 (STS), Ser124, and Gln172. Residues Gln172 and His180 each coordinate Zn(2+).

Belongs to the SIS family. GmhA subfamily. As to quaternary structure, homotetramer. Requires Zn(2+) as cofactor.

It is found in the cytoplasm. It carries out the reaction 2 D-sedoheptulose 7-phosphate = D-glycero-alpha-D-manno-heptose 7-phosphate + D-glycero-beta-D-manno-heptose 7-phosphate. It functions in the pathway carbohydrate biosynthesis; D-glycero-D-manno-heptose 7-phosphate biosynthesis; D-glycero-alpha-D-manno-heptose 7-phosphate and D-glycero-beta-D-manno-heptose 7-phosphate from sedoheptulose 7-phosphate: step 1/1. Functionally, catalyzes the isomerization of sedoheptulose 7-phosphate in D-glycero-D-manno-heptose 7-phosphate. The polypeptide is Phosphoheptose isomerase (Actinobacillus succinogenes (strain ATCC 55618 / DSM 22257 / CCUG 43843 / 130Z)).